The sequence spans 140 residues: T cell receptor alpha chain constant (140 aa).

The 89-residue stretch at 19-107 (KSVCLFTDFD…LVEKSFETDT (89 aa)) folds into the Ig-like C1-type domain. Cys22 and Cys72 are joined by a disulfide. 4 N-linked (GlcNAc...) asparagine glycosylation sites follow: Asn32, Asn66, Asn77, and Asn113. The segment at 94-115 (CDVKLVEKSFETDTNLNFQNLS) is connecting peptide. Residues 116–138 (VIGFRILLLKVAGFNLLMTLRLW) form a helical membrane-spanning segment. The Cytoplasmic portion of the chain corresponds to 139 to 140 (SS).

As to quaternary structure, alpha-beta TR is a heterodimer composed of an alpha and beta chain; disulfide-linked. The alpha-beta TR is associated with the transmembrane signaling CD3 coreceptor proteins to form the TR-CD3 (TcR or TCR). The assembly of alpha-beta TR heterodimers with CD3 occurs in the endoplasmic reticulum where a single alpha-beta TR heterodimer associates with one CD3D-CD3E heterodimer, one CD3G-CD3E heterodimer and one CD247 homodimer forming a stable octameric structure. CD3D-CD3E and CD3G-CD3E heterodimers preferentially associate with TR alpha and TR beta chains, respectively. The association of the CD247 homodimer is the last step of TcR assembly in the endoplasmic reticulum and is required for transport to the cell surface.

Its subcellular location is the cell membrane. In terms of biological role, constant region of T cell receptor (TR) alpha chain. Alpha-beta T cell receptors are antigen specific receptors which are essential to the immune response and are present on the cell surface of T lymphocytes. Recognize peptide-major histocompatibility (MH) (pMH) complexes that are displayed by antigen presenting cells (APC), a prerequisite for efficient T cell adaptive immunity against pathogens. Binding of alpha-beta TR to pMH complex initiates TR-CD3 clustering on the cell surface and intracellular activation of LCK that phosphorylates the ITAM motifs of CD3G, CD3D, CD3E and CD247 enabling the recruitment of ZAP70. In turn, ZAP70 phosphorylates LAT, which recruits numerous signaling molecules to form the LAT signalosome. The LAT signalosome propagates signal branching to three major signaling pathways, the calcium, the mitogen-activated protein kinase (MAPK) kinase and the nuclear factor NF-kappa-B (NF-kB) pathways, leading to the mobilization of transcription factors that are critical for gene expression and essential for T cell growth and differentiation. The T cell repertoire is generated in the thymus, by V-(D)-J rearrangement. This repertoire is then shaped by intrathymic selection events to generate a peripheral T cell pool of self-MH restricted, non-autoaggressive T cells. Post-thymic interaction of alpha-beta TR with the pMH complexes shapes TR structural and functional avidity. The sequence is that of T cell receptor alpha chain constant from Homo sapiens (Human).